The sequence spans 379 residues: Protein RecA (379 aa).

79 to 86 is a binding site for ATP; that stretch reads GPESSGKT.

The protein belongs to the RecA family.

Its subcellular location is the cytoplasm. In terms of biological role, can catalyze the hydrolysis of ATP in the presence of single-stranded DNA, the ATP-dependent uptake of single-stranded DNA by duplex DNA, and the ATP-dependent hybridization of homologous single-stranded DNAs. It interacts with LexA causing its activation and leading to its autocatalytic cleavage. The chain is Protein RecA from Streptococcus thermophilus.